A 175-amino-acid polypeptide reads, in one-letter code: Peptide deformylase (175 aa).

Residues Cys-96 and His-138 each coordinate Fe cation. The active site involves Glu-139. Residue His-142 participates in Fe cation binding.

It belongs to the polypeptide deformylase family. Fe(2+) is required as a cofactor.

The catalysed reaction is N-terminal N-formyl-L-methionyl-[peptide] + H2O = N-terminal L-methionyl-[peptide] + formate. Removes the formyl group from the N-terminal Met of newly synthesized proteins. Requires at least a dipeptide for an efficient rate of reaction. N-terminal L-methionine is a prerequisite for activity but the enzyme has broad specificity at other positions. The protein is Peptide deformylase of Helicobacter pylori (strain Shi470).